A 409-amino-acid chain; its full sequence is Adenosine deaminase (409 aa).

H65, H67, H207, and D314 together coordinate Zn(2+).

This sequence belongs to the metallo-dependent hydrolases superfamily. Zn(2+) serves as cofactor.

The enzyme catalyses adenosine + H2O + H(+) = inosine + NH4(+). In terms of biological role, catalyzes the deamination of adenosine into inosine. Is also able to deaminate adenine, but with considerably less efficiency. Is not active toward 6-chloroadenine. This chain is Adenosine deaminase, found in Helicobacter pylori (strain ATCC 700392 / 26695) (Campylobacter pylori).